Consider the following 243-residue polypeptide: BTB/POZ domain-containing protein At4g08455 (243 aa).

Residues 19–51 (KECYVEAGETEEELKREIDDLKAKVAFLRLSSS) are a coiled coil. Residues 64 to 136 (TDVVLIASED…LYTAEACLDE (73 aa)) form the BTB domain.

Interacts with CUL3A and CUL3B.

It participates in protein modification; protein ubiquitination. Functionally, may act as a substrate-specific adapter of an E3 ubiquitin-protein ligase complex (CUL3-RBX1-BTB) which mediates the ubiquitination and subsequent proteasomal degradation of target proteins. The protein is BTB/POZ domain-containing protein At4g08455 of Arabidopsis thaliana (Mouse-ear cress).